Consider the following 150-residue polypeptide: UPF0178 protein Sbal_1771 (150 aa).

The protein belongs to the UPF0178 family.

In Shewanella baltica (strain OS155 / ATCC BAA-1091), this protein is UPF0178 protein Sbal_1771.